We begin with the raw amino-acid sequence, 714 residues long: FERM domain-containing protein 7 (714 aa).

Residues 2 to 282 (LHLKVQFLDD…EYHAFFRLSE (281 aa)) enclose the FERM domain. A coiled-coil region spans residues 537 to 558 (NIRMKSFQQDLQVLQEAIARTS).

Expressed in liver, kidney, pancreas and at low levels in brain and heart. Expressed in embryonic brain and developing neural retina.

It localises to the cell projection. It is found in the neuron projection. The protein resides in the growth cone. Functionally, plays a role in neurite development, may be through the activation of the GTPase RAC1. Plays a role in the control of eye movement and gaze stability. The sequence is that of FERM domain-containing protein 7 (FRMD7) from Homo sapiens (Human).